We begin with the raw amino-acid sequence, 270 residues long: UPF0354 protein Bcer98_3354 (270 aa).

The protein belongs to the UPF0354 family.

The polypeptide is UPF0354 protein Bcer98_3354 (Bacillus cytotoxicus (strain DSM 22905 / CIP 110041 / 391-98 / NVH 391-98)).